The following is a 512-amino-acid chain: 2-isopropylmalate synthase (512 aa).

In terms of domain architecture, Pyruvate carboxyltransferase spans 4 to 266 (IQFFDTTLRD…ETNIVLNQFK (263 aa)). Positions 13, 201, 203, and 237 each coordinate Mn(2+). The regulatory domain stretch occupies residues 390-512 (ELKHLQVQYV…SKQADFEEVK (123 aa)).

The protein belongs to the alpha-IPM synthase/homocitrate synthase family. LeuA type 1 subfamily. In terms of assembly, homodimer. The cofactor is Mn(2+).

Its subcellular location is the cytoplasm. It catalyses the reaction 3-methyl-2-oxobutanoate + acetyl-CoA + H2O = (2S)-2-isopropylmalate + CoA + H(+). It participates in amino-acid biosynthesis; L-leucine biosynthesis; L-leucine from 3-methyl-2-oxobutanoate: step 1/4. In terms of biological role, catalyzes the condensation of the acetyl group of acetyl-CoA with 3-methyl-2-oxobutanoate (2-ketoisovalerate) to form 3-carboxy-3-hydroxy-4-methylpentanoate (2-isopropylmalate). This is 2-isopropylmalate synthase from Listeria innocua serovar 6a (strain ATCC BAA-680 / CLIP 11262).